Consider the following 401-residue polypeptide: Argininosuccinate synthase (401 aa).

ATP-binding positions include 11–19 (AYSGGLDTS) and A38. Y89 and S94 together coordinate L-citrulline. An ATP-binding site is contributed by G119. L-aspartate-binding residues include T121, N125, and D126. N125 provides a ligand contact to L-citrulline. R129, S180, S189, E265, and Y277 together coordinate L-citrulline.

This sequence belongs to the argininosuccinate synthase family. Type 1 subfamily. In terms of assembly, homotetramer.

It localises to the cytoplasm. It carries out the reaction L-citrulline + L-aspartate + ATP = 2-(N(omega)-L-arginino)succinate + AMP + diphosphate + H(+). It functions in the pathway amino-acid biosynthesis; L-arginine biosynthesis; L-arginine from L-ornithine and carbamoyl phosphate: step 2/3. In Syntrophus aciditrophicus (strain SB), this protein is Argininosuccinate synthase.